The following is a 153-amino-acid chain: Nucleoside diphosphate kinase (153 aa).

Lysine 9, phenylalanine 57, arginine 85, threonine 91, arginine 102, and asparagine 112 together coordinate ATP. Residue histidine 115 is the Pros-phosphohistidine intermediate of the active site.

Belongs to the NDK family. Homotetramer. Mg(2+) is required as a cofactor.

It is found in the cytoplasm. The catalysed reaction is a 2'-deoxyribonucleoside 5'-diphosphate + ATP = a 2'-deoxyribonucleoside 5'-triphosphate + ADP. It catalyses the reaction a ribonucleoside 5'-diphosphate + ATP = a ribonucleoside 5'-triphosphate + ADP. Its function is as follows. Major role in the synthesis of nucleoside triphosphates other than ATP. The ATP gamma phosphate is transferred to the NDP beta phosphate via a ping-pong mechanism, using a phosphorylated active-site intermediate. The polypeptide is Nucleoside diphosphate kinase (Parabacteroides distasonis (strain ATCC 8503 / DSM 20701 / CIP 104284 / JCM 5825 / NCTC 11152)).